A 258-amino-acid chain; its full sequence is Polysialic acid transport protein KpsM (258 aa).

Topologically, residues 1 to 30 (MARSGFEVQKVTVEALFLREIRTRFGKFRL) are cytoplasmic. Residues 30–251 (LGYLWAILEP…FIGLALYRTR (222 aa)) form the ABC transmembrane type-2 domain. Residues 31-54 (GYLWAILEPSAHLLILLGILGYVM) traverse the membrane as a helical segment. Over 55 to 61 (HRTMPDI) the chain is Periplasmic. The chain crosses the membrane as a helical span at residues 62–81 (SFPVFLLNGLIPFFIFSSIS). The Cytoplasmic portion of the chain corresponds to 82 to 108 (KRSIGAIEANQGLFNYRPVKPIDTIIA). The chain crosses the membrane as a helical span at residues 109–132 (RALLETLIYVAVYILLMLIVWMTG). At 133–143 (EYFEITNFLQL) the chain is on the periplasmic side. The helical transmembrane segment at 144–165 (VLTWSLLIILSCGVGLIFMVVG) threads the bilayer. At 166 to 174 (KTFPEMQKV) the chain is on the cytoplasmic side. The chain crosses the membrane as a helical span at residues 175–195 (LPILLKPLYFISCIMFPLHSI). At 196 to 226 (PKQYWSYLLWNPLVHVVELSREAVMPGYISE) the chain is on the periplasmic side. Residues 227 to 247 (GVSLNYLAMFTLVTLFIGLAL) traverse the membrane as a helical segment. The Cytoplasmic segment spans residues 248–258 (YRTREEAMLTS).

This sequence belongs to the ABC-2 integral membrane protein family.

The protein localises to the cell inner membrane. In terms of biological role, kpsM and KpsT constitute a system for the transport of polysialic acid across the cytoplasmic membrane. This chain is Polysialic acid transport protein KpsM (kpsM), found in Escherichia coli.